A 684-amino-acid chain; its full sequence is Protein real-time (684 aa).

In terms of domain architecture, PRELI/MSF1 spans 2 to 178 (VQKYESPVRI…FVNELKQEGI (177 aa)). The CRAL-TRIO domain maps to 297–474 (TPAVVEKYFP…FLGGSCNVID (178 aa)). One can recognise a GOLD domain in the interval 537 to 684 (HHGLYKAVDL…GFSSNSLQSR (148 aa)).

It is found in the mitochondrion. This Anopheles gambiae (African malaria mosquito) protein is Protein real-time.